Here is a 349-residue protein sequence, read N- to C-terminus: Pinopsin (349 aa).

The segment covering M1–P16 has biased composition (polar residues). Residues M1–P22 form a disordered region. Residues M1 to M32 lie on the Extracellular side of the membrane. The helical transmembrane segment at Y33 to V57 threads the bilayer. The Cytoplasmic portion of the chain corresponds to S58 to N69. The helical transmembrane segment at Y70–N94 threads the bilayer. At I95 to E109 the chain is on the extracellular side. Cysteines 106 and 183 form a disulfide. A helical membrane pass occupies residues G110–L129. The Cytoplasmic segment spans residues E130 to H148. Residues A149–S172 traverse the membrane as a helical segment. At S173–S196 the chain is on the extracellular side. N194 carries N-linked (GlcNAc...) asparagine glycosylation. The helical transmembrane segment at Y197–L224 threads the bilayer. The Cytoplasmic portion of the chain corresponds to R225 to R246. A helical membrane pass occupies residues M247–A270. The Extracellular segment spans residues T271–Q278. Residues P279–M303 traverse the membrane as a helical segment. The residue at position 290 (K290) is an N6-(retinylidene)lysine. Over N304 to V349 the chain is Cytoplasmic. Residues C316 and C317 are each lipidated (S-palmitoyl cysteine). A disordered region spans residues G325 to V349.

It belongs to the G-protein coupled receptor 1 family. Opsin subfamily. Phosphorylated on some or all of the serine and threonine residues present in the C-terminal region. As to expression, pineal gland.

The protein localises to the membrane. Its function is as follows. Produces a slow and prolonged phototransduction response consistent with the non-visual function of pineal photoreception. This chain is Pinopsin, found in Columba livia (Rock dove).